The chain runs to 177 residues: Mitochondrial inner membrane protease subunit 2 (177 aa).

Residues Phe19–Ala37 traverse the membrane as a helical segment. Residues Ser43 and Lys91 contribute to the active site.

This sequence belongs to the peptidase S26 family. IMP2 subfamily. As to quaternary structure, heterodimer of 2 subunits, IMMPL1 and IMMPL2.

It is found in the mitochondrion inner membrane. Catalyzes the removal of transit peptides required for the targeting of proteins from the mitochondrial matrix, across the inner membrane, into the inter-membrane space. Known to process the nuclear encoded protein DIABLO. The sequence is that of Mitochondrial inner membrane protease subunit 2 (IMMP2L) from Bos taurus (Bovine).